The following is a 421-amino-acid chain: MHDAVTRPTPPADATAWPRRITQAVKIGGVTVGGGHPVVVQSMTNTDTADIAGSVKQVADLWRAGSEMVRLTVNNAESAAAIPRIVDKLRMMGIDVPLIGDFHYNGHQLLAAEPACAEALAKYRINPGNVGFGKKKDLQFGQLIECAIKYDKPVRIGANWGSLDQSLAAQLMDENAQRETPWDAGRVLREALIRSALDSAERAVELGLPRERIILSAKVSGVQELIAVYRDMASRCDFALHLGLTEAGIGSKGIVASAAALSVLLQQGIGDTIRISLTPEPGQSRTHEVIVAQELLQTTGQRAFTPMVTACPGCGRTTSEFFQELAGVVQNHVRAKMPEWKITNPGAENMTLAVMGCVVNGPGESRHANIGISLPGTGEAPSAPVFIDGEKSVILRGENIAQEFIGLIDQYVERTYARRAG.

[4Fe-4S] cluster-binding residues include C311, C314, C357, and E364.

This sequence belongs to the IspG family. It depends on [4Fe-4S] cluster as a cofactor.

It carries out the reaction (2E)-4-hydroxy-3-methylbut-2-enyl diphosphate + oxidized [flavodoxin] + H2O + 2 H(+) = 2-C-methyl-D-erythritol 2,4-cyclic diphosphate + reduced [flavodoxin]. The protein operates within isoprenoid biosynthesis; isopentenyl diphosphate biosynthesis via DXP pathway; isopentenyl diphosphate from 1-deoxy-D-xylulose 5-phosphate: step 5/6. Functionally, converts 2C-methyl-D-erythritol 2,4-cyclodiphosphate (ME-2,4cPP) into 1-hydroxy-2-methyl-2-(E)-butenyl 4-diphosphate. This is 4-hydroxy-3-methylbut-2-en-1-yl diphosphate synthase (flavodoxin) from Xanthomonas oryzae pv. oryzae (strain KACC10331 / KXO85).